We begin with the raw amino-acid sequence, 422 residues long: GPI mannosyltransferase 1 (422 aa).

8 helical membrane-spanning segments follow: residues threonine 10–tyrosine 30, phenylalanine 82–leucine 102, isoleucine 162–valine 182, leucine 216–isoleucine 236, isoleucine 282–leucine 302, serine 327–leucine 347, leucine 352–tyrosine 372, and glycine 385–isoleucine 405.

The protein belongs to the PIGM family.

It is found in the endoplasmic reticulum membrane. The protein operates within glycolipid biosynthesis; glycosylphosphatidylinositol-anchor biosynthesis. Its function is as follows. Mannosyltransferase involved in glycosylphosphatidylinositol-anchor biosynthesis. Transfers the first alpha-1,4-mannose to GlcN-acyl-PI during GPI precursor assembly. Required for cell wall integrity. The chain is GPI mannosyltransferase 1 (GPI14) from Gibberella zeae (strain ATCC MYA-4620 / CBS 123657 / FGSC 9075 / NRRL 31084 / PH-1) (Wheat head blight fungus).